We begin with the raw amino-acid sequence, 240 residues long: Ion-translocating oxidoreductase complex subunit E (240 aa).

The next 5 helical transmembrane spans lie at 41–61 (LGLG…VSLV), 71–91 (LPAF…LMQA), 95–115 (ELYQ…VILG), 130–150 (SFDG…LGGL), and 184–204 (GFLL…LIAL).

It belongs to the NqrDE/RnfAE family. The complex is composed of six subunits: RnfA, RnfB, RnfC, RnfD, RnfE and RnfG.

It is found in the cell inner membrane. Its function is as follows. Part of a membrane-bound complex that couples electron transfer with translocation of ions across the membrane. The protein is Ion-translocating oxidoreductase complex subunit E of Pseudomonas aeruginosa (strain ATCC 15692 / DSM 22644 / CIP 104116 / JCM 14847 / LMG 12228 / 1C / PRS 101 / PAO1).